A 1842-amino-acid polypeptide reads, in one-letter code: Fatty acid synthase alpha subunit pigJ (1842 aa).

Residues Gly-120–Asp-184 are disordered. Residues Ser-140–Thr-175 show a composition bias toward low complexity. In terms of domain architecture, Carrier spans Asp-184–Lys-262. Residue Ser-222 is modified to O-(pantetheine 4'-phosphoryl)serine. Residues Gly-611 to Gly-807 are beta-ketoacyl reductase. The Ketosynthase family 3 (KS3) domain maps to Lys-1058 to Ala-1585. Active-site for beta-ketoacyl synthase activity residues include Cys-1244, His-1470, and His-1511. Residues Lys-1649–Thr-1672 form a disordered region. A compositionally biased stretch (low complexity) spans Asn-1658–Ser-1668. 3 residues coordinate Mg(2+): Asp-1725, Val-1726, and Glu-1727. Acetyl-CoA-binding positions include Asp-1725–Glu-1727, Ser-1761, Glu-1770–Ser-1780, and Ile-1823–His-1825. The Mg(2+) site is built by Thr-1824 and His-1825.

Belongs to the thiolase-like superfamily. Fungal fatty acid synthetase subunit alpha family. In terms of assembly, [Alpha(6)beta(6)] hexamers of two multifunctional subunits (alpha and beta).

It catalyses the reaction acetyl-CoA + n malonyl-CoA + 2n NADPH + 4n H(+) = a long-chain-acyl-CoA + n CoA + n CO2 + 2n NADP(+).. The catalysed reaction is a fatty acyl-[ACP] + malonyl-[ACP] + H(+) = a 3-oxoacyl-[ACP] + holo-[ACP] + CO2. It carries out the reaction a (3R)-hydroxyacyl-[ACP] + NADP(+) = a 3-oxoacyl-[ACP] + NADPH + H(+). It functions in the pathway secondary metabolite biosynthesis. Functionally, fatty acid synthase alpha subunit; part of the gene cluster that mediates the biosynthesis of azaphilone pigments (MonAzPs), a complex mixture of compounds with a common azaphilone skeleton very widely used as food colorants. PigJ and pigK form the two subunits of a dedicated fungal fatty acid synthase (FAS) that produces the side chain fatty acyl moiety of MonAzPs, a beta-keto fatty acid. The chain length control of the pigJ-pigK FAS is somewhat flexible as MonAzPs features either a beta-ketooctanoic or a beta-ketodecanoic acid moiety. The beta-ketoacyl-ACP probably serves as the substrate for the acetyltransferase pigD that directly transfers the fatty acyl chain to the C-4 alcohol of the pyran ring. The first step of the pathway is performed by the nrPKS pigA that forms the hexaketide precursor from successive condensations of five malonyl-CoA units, with a simple acetyl-CoA starter unit. The role of esterase pigG is not clear, but it may play at most a supplementary role in the formation of the benzaldehyde produced by the pigA nrPKS. This very reactive benzaldehyde is intercepted by the pigC ketoreductase that to provide the first stable enzyme-free MonAzPs intermediate, 6-(4-hydroxy-2-oxopentyl)-3-methyl-2,4-dioxocyclohexane carbaldehyde, also known as M7PKS-1. The FAD-dependent monooxygenase pigN hydroxylates M7PKS-1 at C-4, which triggers the formation of the pyran ring. PigJ, pigK and pigD are involved in the acetylation of the pyran ring. PigJ and pigK form the two subunits of a dedicated fungal FAS that produces the side chain fatty acyl moiety of MonAzPs and pigD transfers the fatty acyl chain to the C-4 alcohol. PigM and pigO are involved in the elimination of the omega-1 alcohol. PigM acts as an O-acetyltransferase that synthesizes the putative O-11 acetyl intermediate whereas pigO eliminates acetic acid to yield an intermediate with a C10(11) double bond. The dehydration of the C-11 alcohol followed by the reduction of the C6(7) double bond by the NAD(P)H-dependent oxidoreductase pigE increases the electrophilicity of the C-5 ketone of the resulting acyl benzopyran. This in turn sets up the C-5 ketone for an intramolecular Knoevenagel aldol condensation with the C-20 enol of the side chain. This condensation affords the characteristic linear tricyclic carbon skeletons of the yellow pigments that serve as the common precursors for the classical yellow pigments monascin and ankaflavin, orange pigments rubopunctatin and monascorubrin, and red pigments ribropunctamine and monascorubramine. The FAD-dependent oxidoreductase pigF is especially invoved in the biosynthesis of orange and red pigments via desaturation of C6(7). The chain is Fatty acid synthase alpha subunit pigJ from Monascus ruber (Mold).